The sequence spans 636 residues: Capsid vertex component 2 (636 aa).

Residues methionine 1–arginine 48 are interaction with major capsid protein/MCP. The disordered stretch occupies residues aspartate 97 to serine 125.

This sequence belongs to the herpesviridae CVC2 protein family. In terms of assembly, heterodimerizes with CVC1. Interacts with major capsid protein/MCP and triplex capsid protein 1/TRX1 at the pentamer vertices. Interacts with the large tegument protein/LTP.

It localises to the virion. Its subcellular location is the host nucleus. Its function is as follows. Capsid vertex-specific component that plays a role during viral DNA encapsidation, assuring correct genome cleavage and presumably stabilizing capsids that contain full-length viral genomes. Participates in the interaction between the capsid and the tegument through interaction with the large tegument protein/LTP. This Homo sapiens (Human) protein is Capsid vertex component 2.